The sequence spans 141 residues: Ribosome-binding factor A (141 aa).

This sequence belongs to the RbfA family. As to quaternary structure, monomer. Binds 30S ribosomal subunits, but not 50S ribosomal subunits or 70S ribosomes.

It is found in the cytoplasm. Functionally, one of several proteins that assist in the late maturation steps of the functional core of the 30S ribosomal subunit. Associates with free 30S ribosomal subunits (but not with 30S subunits that are part of 70S ribosomes or polysomes). Required for efficient processing of 16S rRNA. May interact with the 5'-terminal helix region of 16S rRNA. This is Ribosome-binding factor A from Maricaulis maris (strain MCS10) (Caulobacter maris).